A 221-amino-acid polypeptide reads, in one-letter code: UPF0758 protein YicR (221 aa).

Positions 99–221 (ALLSPEMTLE…YVSFAERGWI (123 aa)) constitute an MPN domain. Positions 170, 172, and 183 each coordinate Zn(2+). Positions 170 to 183 (HNHPSGCAEPSKAD) match the JAMM motif motif.

Belongs to the UPF0758 family. YicR subfamily.

This Salmonella arizonae (strain ATCC BAA-731 / CDC346-86 / RSK2980) protein is UPF0758 protein YicR.